The chain runs to 377 residues: NADH dehydrogenase [ubiquinone] 1 alpha subcomplex subunit 9, mitochondrial (377 aa).

The transit peptide at 1–35 (MAAAVRFRVVRALPMSRPAITAAATSVFCGSSHRQ) directs the protein to the mitochondrion. The residue at position 175 (lysine 175) is an N6-succinyllysine. Lysine 189 and lysine 370 each carry N6-acetyllysine.

Belongs to the complex I NDUFA9 subunit family. Complex I is composed of 45 different subunits. This a component of the hydrophobic protein fraction. Interacts with BLOC1S1. Interacts with SLC2A4. Interacts with CLOCK. Interacts with RAB5IF. FAD is required as a cofactor. In terms of processing, acetylated on lysine residues. BLOC1S1 is required for acetylation. Acetylated by CLOCK in a circadian manner.

The protein localises to the mitochondrion matrix. Functionally, accessory subunit of the mitochondrial membrane respiratory chain NADH dehydrogenase (Complex I), that is believed not to be involved in catalysis. Complex I functions in the transfer of electrons from NADH to the respiratory chain. The immediate electron acceptor for the enzyme is believed to be ubiquinone. The sequence is that of NADH dehydrogenase [ubiquinone] 1 alpha subcomplex subunit 9, mitochondrial (Ndufa9) from Mus musculus (Mouse).